The chain runs to 756 residues: Polyribonucleotide nucleotidyltransferase (756 aa).

Mg(2+)-binding residues include aspartate 527 and aspartate 533. Positions 593–652 (PRITTIKVPVDKIGEVIGPKGKMINSITEETGASISIEDDGTVFVGASNGEAAQAAIDKI) constitute a KH domain. The S1 motif domain occupies 664–733 (GERFLGTVVK…NRGKISLVLV (70 aa)).

This sequence belongs to the polyribonucleotide nucleotidyltransferase family. Mg(2+) serves as cofactor.

It is found in the cytoplasm. It catalyses the reaction RNA(n+1) + phosphate = RNA(n) + a ribonucleoside 5'-diphosphate. In terms of biological role, involved in mRNA degradation. Catalyzes the phosphorolysis of single-stranded polyribonucleotides processively in the 3'- to 5'-direction. This Mycolicibacterium gilvum (strain PYR-GCK) (Mycobacterium gilvum (strain PYR-GCK)) protein is Polyribonucleotide nucleotidyltransferase.